Consider the following 43-residue polypeptide: Alpha-1-antiproteinase 4 (43 aa).

The protein belongs to the serpin family. N-glycosylated with carbohydrates having biantennary side chains. In terms of tissue distribution, plasma.

It is found in the secreted. The chain is Alpha-1-antiproteinase 4 from Equus caballus (Horse).